A 221-amino-acid chain; its full sequence is UPF0319 protein NTHI1987 (221 aa).

Positions 1 to 21 are cleaved as a signal peptide; it reads MKLRAVVLGLATLCTSTATFA.

The protein belongs to the UPF0319 family.

The sequence is that of UPF0319 protein NTHI1987 from Haemophilus influenzae (strain 86-028NP).